A 241-amino-acid polypeptide reads, in one-letter code: Pyridoxal phosphate phosphatase PHOSPHO2 (241 aa).

The active-site Nucleophile is aspartate 8. 2 residues coordinate Mg(2+): aspartate 8 and aspartate 10. The Proton donor role is filled by aspartate 10. Substrate is bound by residues aspartate 19 and aspartate 99. Aspartate 179 is a Mg(2+) binding site.

The protein belongs to the HAD-like hydrolase superfamily. PHOSPHO family. It depends on Mg(2+) as a cofactor.

The catalysed reaction is pyridoxal 5'-phosphate + H2O = pyridoxal + phosphate. Functionally, phosphatase that has high activity toward pyridoxal 5'-phosphate (PLP). Also active at much lower level toward pyrophosphate, phosphoethanolamine (PEA), phosphocholine (PCho), phospho-l-tyrosine, fructose-6-phosphate, p-nitrophenyl phosphate, and h-glycerophosphate. In Homo sapiens (Human), this protein is Pyridoxal phosphate phosphatase PHOSPHO2 (PHOSPHO2).